Consider the following 409-residue polypeptide: S-adenosylmethionine synthase (409 aa).

Residue H15 coordinates ATP. Position 17 (D17) interacts with Mg(2+). E43 contacts K(+). L-methionine is bound by residues E56 and Q100. The flexible loop stretch occupies residues 100-110 (QSSDIAQGVNE). ATP is bound by residues 171–173 (DGK), 248–249 (KF), D257, 263–264 (RK), A280, and K284. D257 provides a ligand contact to L-methionine. K288 contributes to the L-methionine binding site.

The protein belongs to the AdoMet synthase family. As to quaternary structure, homotetramer; dimer of dimers. The cofactor is Mg(2+). K(+) serves as cofactor.

It is found in the cytoplasm. The catalysed reaction is L-methionine + ATP + H2O = S-adenosyl-L-methionine + phosphate + diphosphate. It functions in the pathway amino-acid biosynthesis; S-adenosyl-L-methionine biosynthesis; S-adenosyl-L-methionine from L-methionine: step 1/1. Functionally, catalyzes the formation of S-adenosylmethionine (AdoMet) from methionine and ATP. The overall synthetic reaction is composed of two sequential steps, AdoMet formation and the subsequent tripolyphosphate hydrolysis which occurs prior to release of AdoMet from the enzyme. This is S-adenosylmethionine synthase from Prochlorococcus marinus (strain NATL2A).